The sequence spans 315 residues: Mitochondrial glycine transporter (315 aa).

3 Solcar repeats span residues 19 to 102 (SKTT…LRTG), 125 to 206 (TANL…LKRR), and 221 to 305 (KSSS…LILR). The next 6 helical transmembrane spans lie at 25 to 50 (FTAG…TRVQ), 77 to 103 (GTLP…RTGL), 128 to 153 (LATG…VRYE), 181 to 204 (GFGA…EQLK), 225 to 251 (INFV…KTRL), and 280 to 298 (GLGL…AWTV).

It belongs to the mitochondrial carrier (TC 2.A.29) family. SLC25A38 subfamily.

The protein localises to the mitochondrion inner membrane. It carries out the reaction glycine(in) = glycine(out). Functionally, mitochondrial glycine transporter that imports glycine into the mitochondrial matrix. Plays an important role in providing glycine for the first enzymatic step in heme biosynthesis, the condensation of glycine with succinyl-CoA to produce 5-aminolevulinate (ALA) in the mitochondrial matrix. The protein is Mitochondrial glycine transporter of Aspergillus niger (strain ATCC MYA-4892 / CBS 513.88 / FGSC A1513).